The sequence spans 450 residues: 5-amino-6-(D-ribitylamino)uracil--L-tyrosine 4-hydroxyphenyl transferase (450 aa).

A disordered region spans residues 1–24; the sequence is MPDVPETVGTPDGSTEFEHRPTTD. One can recognise a Radical SAM core domain in the interval 82-350; the sequence is VTFVANLNNN…MIAVSRLFLD (269 aa). C96, C100, and C103 together coordinate [4Fe-4S] cluster. The segment at 430–450 is disordered; it reads PDADVLGPQLGPRADGTPLLD.

Belongs to the radical SAM superfamily. CofH family. Consists of two subunits, CofG and CofH. It depends on [4Fe-4S] cluster as a cofactor.

It carries out the reaction 5-amino-6-(D-ribitylamino)uracil + L-tyrosine + S-adenosyl-L-methionine = 5-amino-5-(4-hydroxybenzyl)-6-(D-ribitylimino)-5,6-dihydrouracil + 2-iminoacetate + 5'-deoxyadenosine + L-methionine + H(+). Its pathway is cofactor biosynthesis; coenzyme F0 biosynthesis. Catalyzes the radical-mediated synthesis of 5-amino-5-(4-hydroxybenzyl)-6-(D-ribitylimino)-5,6-dihydrouracil from 5-amino-6-(D-ribitylamino)uracil and L-tyrosine. In Haloarcula marismortui (strain ATCC 43049 / DSM 3752 / JCM 8966 / VKM B-1809) (Halobacterium marismortui), this protein is 5-amino-6-(D-ribitylamino)uracil--L-tyrosine 4-hydroxyphenyl transferase.